Reading from the N-terminus, the 419-residue chain is Queuine tRNA-ribosyltransferase accessory subunit 2 (419 aa).

The Zn(2+) site is built by Cys-326, Cys-328, Cys-331, and His-357.

The protein belongs to the queuine tRNA-ribosyltransferase family. QTRT2 subfamily. Heterodimer of a catalytic subunit and an accessory subunit. The cofactor is Zn(2+).

The protein localises to the cytoplasm. Non-catalytic subunit of the queuine tRNA-ribosyltransferase (TGT) that catalyzes the base-exchange of a guanine (G) residue with queuine (Q) at position 34 (anticodon wobble position) in tRNAs with GU(N) anticodons (tRNA-Asp, -Asn, -His and -Tyr), resulting in the hypermodified nucleoside queuosine (7-(((4,5-cis-dihydroxy-2-cyclopenten-1-yl)amino)methyl)-7-deazaguanosine). In Drosophila grimshawi (Hawaiian fruit fly), this protein is Queuine tRNA-ribosyltransferase accessory subunit 2.